The chain runs to 411 residues: LL-diaminopimelate aminotransferase (411 aa).

Tyr16 and Gly43 together coordinate substrate. Residues Tyr73, 109 to 110 (AK), Tyr133, Asn188, Tyr219, and 247 to 249 (SYS) each bind pyridoxal 5'-phosphate. Positions 110, 133, and 188 each coordinate substrate. An N6-(pyridoxal phosphate)lysine modification is found at Lys250. Pyridoxal 5'-phosphate contacts are provided by Arg258 and Asn293. Residues Asn293 and Arg389 each contribute to the substrate site.

This sequence belongs to the class-I pyridoxal-phosphate-dependent aminotransferase family. LL-diaminopimelate aminotransferase subfamily. Homodimer. It depends on pyridoxal 5'-phosphate as a cofactor.

It catalyses the reaction (2S,6S)-2,6-diaminopimelate + 2-oxoglutarate = (S)-2,3,4,5-tetrahydrodipicolinate + L-glutamate + H2O + H(+). It participates in amino-acid biosynthesis; L-lysine biosynthesis via DAP pathway; LL-2,6-diaminopimelate from (S)-tetrahydrodipicolinate (aminotransferase route): step 1/1. In terms of biological role, involved in the synthesis of meso-diaminopimelate (m-DAP or DL-DAP), required for both lysine and peptidoglycan biosynthesis. Catalyzes the direct conversion of tetrahydrodipicolinate to LL-diaminopimelate. The polypeptide is LL-diaminopimelate aminotransferase (Methanosphaera stadtmanae (strain ATCC 43021 / DSM 3091 / JCM 11832 / MCB-3)).